Consider the following 255-residue polypeptide: Acetylglutamate kinase (255 aa).

Substrate contacts are provided by residues 40-41 (GG), arginine 62, and asparagine 153.

Belongs to the acetylglutamate kinase family. ArgB subfamily.

It is found in the cytoplasm. It carries out the reaction N-acetyl-L-glutamate + ATP = N-acetyl-L-glutamyl 5-phosphate + ADP. It functions in the pathway amino-acid biosynthesis; L-arginine biosynthesis; N(2)-acetyl-L-ornithine from L-glutamate: step 2/4. Its function is as follows. Catalyzes the ATP-dependent phosphorylation of N-acetyl-L-glutamate. This chain is Acetylglutamate kinase, found in Bacillus cereus (strain G9842).